We begin with the raw amino-acid sequence, 524 residues long: Ribose import ATP-binding protein RbsA (524 aa).

2 ABC transporter domains span residues 17–252 (LQLD…GRSI) and 263–505 (IGQP…VSQV). 49-56 (GENGAGKS) is a binding site for ATP.

This sequence belongs to the ABC transporter superfamily. Ribose importer (TC 3.A.1.2.1) family. As to quaternary structure, the complex is composed of an ATP-binding protein (RbsA), two transmembrane proteins (RbsC) and a solute-binding protein (RbsB).

Its subcellular location is the cell membrane. It catalyses the reaction D-ribose(out) + ATP + H2O = D-ribose(in) + ADP + phosphate + H(+). Functionally, part of the ABC transporter complex RbsABC involved in ribose import. Responsible for energy coupling to the transport system. This chain is Ribose import ATP-binding protein RbsA, found in Corynebacterium glutamicum (strain ATCC 13032 / DSM 20300 / JCM 1318 / BCRC 11384 / CCUG 27702 / LMG 3730 / NBRC 12168 / NCIMB 10025 / NRRL B-2784 / 534).